Reading from the N-terminus, the 147-residue chain is Putative pre-16S rRNA nuclease (147 aa).

It belongs to the YqgF nuclease family.

It is found in the cytoplasm. In terms of biological role, could be a nuclease involved in processing of the 5'-end of pre-16S rRNA. The protein is Putative pre-16S rRNA nuclease of Ureaplasma parvum serovar 3 (strain ATCC 27815 / 27 / NCTC 11736).